We begin with the raw amino-acid sequence, 331 residues long: Phenylalanine--tRNA ligase alpha subunit (331 aa).

Glutamate 252 contributes to the Mg(2+) binding site.

The protein belongs to the class-II aminoacyl-tRNA synthetase family. Phe-tRNA synthetase alpha subunit type 1 subfamily. In terms of assembly, tetramer of two alpha and two beta subunits. Mg(2+) is required as a cofactor.

The protein localises to the cytoplasm. The enzyme catalyses tRNA(Phe) + L-phenylalanine + ATP = L-phenylalanyl-tRNA(Phe) + AMP + diphosphate + H(+). This chain is Phenylalanine--tRNA ligase alpha subunit, found in Xanthomonas oryzae pv. oryzae (strain MAFF 311018).